The chain runs to 559 residues: CTP synthase (559 aa).

Positions 1–270 (MTKFVFVTGG…DGLICDKLRL (270 aa)) are amidoligase domain. Serine 13 serves as a coordination point for CTP. Serine 13 is a UTP binding site. ATP contacts are provided by residues 14-19 (SLGKGI) and aspartate 71. Mg(2+) contacts are provided by aspartate 71 and glutamate 144. CTP is bound by residues 151–153 (DIE), 191–196 (KTKPTQ), and lysine 227. UTP-binding positions include 191–196 (KTKPTQ) and lysine 227. The Glutamine amidotransferase type-1 domain maps to 295–548 (TIAMVGKYVD…IKAAIDHQKS (254 aa)). Residue glycine 357 coordinates L-glutamine. The active-site Nucleophile; for glutamine hydrolysis is cysteine 384. L-glutamine-binding positions include 385–388 (LGMQ), glutamate 408, and arginine 474. Residues histidine 521 and glutamate 523 contribute to the active site.

The protein belongs to the CTP synthase family. In terms of assembly, homotetramer.

It carries out the reaction UTP + L-glutamine + ATP + H2O = CTP + L-glutamate + ADP + phosphate + 2 H(+). It catalyses the reaction L-glutamine + H2O = L-glutamate + NH4(+). The catalysed reaction is UTP + NH4(+) + ATP = CTP + ADP + phosphate + 2 H(+). It participates in pyrimidine metabolism; CTP biosynthesis via de novo pathway; CTP from UDP: step 2/2. Allosterically activated by GTP, when glutamine is the substrate; GTP has no effect on the reaction when ammonia is the substrate. The allosteric effector GTP functions by stabilizing the protein conformation that binds the tetrahedral intermediate(s) formed during glutamine hydrolysis. Inhibited by the product CTP, via allosteric rather than competitive inhibition. Catalyzes the ATP-dependent amination of UTP to CTP with either L-glutamine or ammonia as the source of nitrogen. Regulates intracellular CTP levels through interactions with the four ribonucleotide triphosphates. This is CTP synthase from Paracidovorax citrulli (strain AAC00-1) (Acidovorax citrulli).